Reading from the N-terminus, the 208-residue chain is Exosome complex component CSL4 homolog (208 aa).

As to quaternary structure, component of the RNA exosome complex. As to expression, ubiquitously expressed.

It localises to the nucleus. Its subcellular location is the nucleolus. The protein resides in the nucleoplasm. Non-catalytic component of the RNA exosome complex which has 3'-&gt;5' exoribonuclease activity and participates in a multitude of cellular RNA processing and degradation events. Involved in regulation of antisense ribosomal siRNA production. Involved in response to cold-warm shock. In Caenorhabditis elegans, this protein is Exosome complex component CSL4 homolog.